The primary structure comprises 333 residues: Fe(3+)-citrate import system permease protein YfmD (333 aa).

A run of 9 helical transmembrane segments spans residues 13–33, 67–87, 97–117, 121–141, 151–171, 201–221, 238–258, 279–299, and 302–322; these read LMMF…NLSV, TLIG…MQAM, IFGV…ILPA, SSVI…YMIA, LALS…AIII, FSVI…VLGL, ILIS…AGPI, YVLP…DVLA, and IAFP…TPFF.

It belongs to the binding-protein-dependent transport system permease family. FecCD subfamily. As to quaternary structure, the complex is composed of one ATP-binding protein (YfmF), two transmembrane proteins (YfmD and YfmE) and a solute-binding protein (YfmC).

The protein resides in the cell membrane. Its function is as follows. Part of the ABC transporter complex YfmCDEF involved in citrate-dependent Fe(3+) import. Involved in the translocation of the substrate across the membrane. The polypeptide is Fe(3+)-citrate import system permease protein YfmD (yfmD) (Bacillus subtilis (strain 168)).